Here is a 445-residue protein sequence, read N- to C-terminus: Phosphoglucosamine mutase (445 aa).

Residue S102 is the Phosphoserine intermediate of the active site. Mg(2+) contacts are provided by S102, D241, D243, and D245. S102 carries the post-translational modification Phosphoserine.

The protein belongs to the phosphohexose mutase family. The cofactor is Mg(2+). Activated by phosphorylation.

The catalysed reaction is alpha-D-glucosamine 1-phosphate = D-glucosamine 6-phosphate. In terms of biological role, catalyzes the conversion of glucosamine-6-phosphate to glucosamine-1-phosphate. This chain is Phosphoglucosamine mutase, found in Shewanella piezotolerans (strain WP3 / JCM 13877).